The primary structure comprises 524 residues: Serine/threonine-protein phosphatase 2A 56 kDa regulatory subunit gamma isoform (524 aa).

N-acetylmethionine is present on M1. Positions 476–508 (SDEARQAQKELKKDRPLVRRKSELPQDPHTEKA) are disordered.

Belongs to the phosphatase 2A regulatory subunit B56 family. PP2A consists of a common heterodimeric core enzyme, composed of PPP2CA a 36 kDa catalytic subunit (subunit C) and PPP2R1A a 65 kDa constant regulatory subunit (PR65 or subunit A), that associates with a variety of regulatory subunits. Proteins that associate with the core dimer include three families of regulatory subunits B (the R2/B/PR55/B55, R3/B''/PR72/PR130/PR59 and R5/B'/B56 families), the 48 kDa variable regulatory subunit, viral proteins, and cell signaling molecules. Interacts with SGO1. Interacts with SGO1; the interaction is direct. May interact with TP53. Interacts with IER3 and/or ERK kinases; regulates ERK dephosphorylation. Interacts with CIP2A; this interaction stabilizes CIP2A. In terms of tissue distribution, highest levels in heart, liver and brain. Lower levels in skeletal muscle, spleen, kidney and lung. Isoform 4 is testis-specific.

The protein resides in the nucleus. The protein localises to the chromosome. Its subcellular location is the centromere. Functionally, the B regulatory subunit might modulate substrate selectivity and catalytic activity, and might also direct the localization of the catalytic enzyme to a particular subcellular compartment. The PP2A-PPP2R5C holoenzyme may activate TP53 and play a role in DNA damage-induced inhibition of cell proliferation. PP2A-PPP2R5C may also regulate the ERK signaling pathway through ERK dephosphorylation. This is Serine/threonine-protein phosphatase 2A 56 kDa regulatory subunit gamma isoform (Ppp2r5c) from Mus musculus (Mouse).